A 283-amino-acid polypeptide reads, in one-letter code: 5'-nucleotidase SurE 2 (283 aa).

A divalent metal cation-binding residues include aspartate 19, aspartate 20, serine 52, and asparagine 110.

It belongs to the SurE nucleotidase family. The cofactor is a divalent metal cation.

It localises to the cytoplasm. It catalyses the reaction a ribonucleoside 5'-phosphate + H2O = a ribonucleoside + phosphate. Its function is as follows. Nucleotidase that shows phosphatase activity on nucleoside 5'-monophosphates. The polypeptide is 5'-nucleotidase SurE 2 (Chlamydia caviae (strain ATCC VR-813 / DSM 19441 / 03DC25 / GPIC) (Chlamydophila caviae)).